A 947-amino-acid polypeptide reads, in one-letter code: Protein translocase subunit SecA (947 aa).

Residues Q87, 105–109 (GEGKT), and D525 each bind ATP. The interval 905-928 (PADNADKTARNPNDPSTWGKVGRN) is disordered. 4 residues coordinate Zn(2+): C931, C933, C942, and H943.

Belongs to the SecA family. As to quaternary structure, monomer and homodimer. Part of the essential Sec protein translocation apparatus which comprises SecA, SecYEG and auxiliary proteins SecDF-YajC and YidC. The cofactor is Zn(2+).

The protein localises to the cell inner membrane. Its subcellular location is the cytoplasm. The enzyme catalyses ATP + H2O + cellular proteinSide 1 = ADP + phosphate + cellular proteinSide 2.. Part of the Sec protein translocase complex. Interacts with the SecYEG preprotein conducting channel. Has a central role in coupling the hydrolysis of ATP to the transfer of proteins into and across the cell membrane, serving both as a receptor for the preprotein-SecB complex and as an ATP-driven molecular motor driving the stepwise translocation of polypeptide chains across the membrane. The polypeptide is Protein translocase subunit SecA (Rhodopseudomonas palustris (strain BisB18)).